A 559-amino-acid chain; its full sequence is Germacrene A synthase 1 (559 aa).

Residues aspartate 312, aspartate 316, aspartate 456, threonine 460, and glutamate 464 each coordinate Mg(2+). The DDXXD motif signature appears at 312-316 (DDTYD).

Belongs to the terpene synthase family. Monomer. Mg(2+) is required as a cofactor. Mainly expressed in sunflower trichomes.

It catalyses the reaction (2E,6E)-farnesyl diphosphate = (+)-(R)-germacrene A + diphosphate. Its pathway is secondary metabolite biosynthesis; terpenoid biosynthesis. In terms of biological role, sesquiterpene synthase involved in germacrene A biosynthesis. Germacrene A is a precursor of several sesquiterpene lactones. In Helianthus annuus (Common sunflower), this protein is Germacrene A synthase 1.